The primary structure comprises 578 residues: Probable actinorhodin transporter (578 aa).

Residues 1-33 form a disordered region; that stretch reads MSSVEADEPDRATAPPSALLPEDGPGPDGTAAG. 12 consecutive transmembrane segments (helical) span residues 78-98, 109-129, 135-155, 170-190, 202-222, 232-252, 259-279, 306-326, 341-361, 369-389, 444-464, and 546-566; these read VIQW…VVGG, MFVV…VAAG, AARF…LGLI, AFGP…GFLV, VFLI…LLLP, FDVV…FPLV, WPAW…GFVA, GLAV…LLAL, LTMT…GAVL, ALHG…LTIG, LGFT…LGSQ, and AMVR…ALAF.

Belongs to the major facilitator superfamily. EmrB family.

It is found in the cell membrane. Functionally, promotes the efflux of actinorhodin. The sequence is that of Probable actinorhodin transporter (actII-2) from Streptomyces coelicolor (strain ATCC BAA-471 / A3(2) / M145).